We begin with the raw amino-acid sequence, 207 residues long: Myosin light chain 6B (207 aa).

Positions 1 to 50 (MPPKKDAPVKKPAGPSISKPAAKSTPGTPLAKAKAEPAAPQAPAKSQEPP) are disordered. A compositionally biased stretch (low complexity) spans 36-50 (EPAAPQAPAKSQEPP). EF-hand domains follow at residues 63–98 (DQLE…LGQN), 140–175 (GTYE…LGEK), and 175–207 (KMTE…ILSL).

As to quaternary structure, myosin is a hexamer of 2 heavy chains and 4 light chains.

Functionally, regulatory light chain of myosin. Does not bind calcium. The chain is Myosin light chain 6B from Mus musculus (Mouse).